A 102-amino-acid polypeptide reads, in one-letter code: ATP-dependent Clp protease adapter protein ClpS (102 aa).

The protein belongs to the ClpS family. In terms of assembly, binds to the N-terminal domain of the chaperone ClpA.

Involved in the modulation of the specificity of the ClpAP-mediated ATP-dependent protein degradation. This Nitrosospira multiformis (strain ATCC 25196 / NCIMB 11849 / C 71) protein is ATP-dependent Clp protease adapter protein ClpS.